The sequence spans 265 residues: Oxidoreductase nsrR (265 aa).

This sequence belongs to the avfA family.

The protein operates within secondary metabolite biosynthesis. In terms of biological role, oxidoreductase; part of the gene cluster that mediates the biosynthesis of the tetrahydroxanthone dimer neosartorin, which exhibits antibacterial activity. The two different monomeric units appear to be synthesized by the same set of enzymes, among which the Baeyer-Villiger monooxygenase nsrF is the key enzyme for the divergence of the biosynthetic routes. The pathway begins with the synthesis of atrochrysone thioester by the polyketide synthase nsrB. The atrochrysone carboxyl ACP thioesterase nsrC then breaks the thioester bond and releases the atrochrysone carboxylic acid from AacuL. Atrochrysone carboxylic acid is decarboxylated by the decarboxylase nsrE, and oxidized by the anthrone oxygenase nsrD to yield emodin. Emodin is then reduced to emodin hydroquinone by the oxidoreductase nsrR. A-ring reduction by the short chain dehydrogenase nsrJ, dehydration by the scytalone dehydratase-like protein nsrI and probable spontaneous re-oxidation, results in overall deoxygenation to chrysophanol. The Baeyer-Villiger monooxygenase nsrF accepts chrysophanol as a substrate to insert one oxygen atom at two different positions to yield the precursors of both monomric units. NsrF is promiscuous/flexible in interacting with the 2 (non methylated and methylated) aromatic rings of chrysophanol, thus diverging the biosynthetic pathway at this point. After the hydrolysis of the lactones, methylesterification by the methyltransferase nsrG yields respectively moniliphenone and 2,2',6'-trihydroxy-4-methyl-6-methoxya-cyldiphenylmethanone. The next steps are the hydroxylation by the FAD-dependent monooxygenase nsrK, followed by isomerization by the monooxygenase nsrQ. The short chain dehydrogenase/reductase nsrO then catalyzes the C-5 ketoreduction to give the xanthone skeleton of blennolide C and 5-acetylblennolide A. The acetyltransferase nsrL has a strict substrate specificity and uses only blennolide A but not blennolide C to yield 5-acetylblennolide A as the single-acetylated product. In the final step of the biosynthesis, the heterodimerization of the 2 xanthones, blennolide C and 5-acetylblennolide A, is catalyzed by the cytochrome P450 monooxygenase nsrP. NsrP can utilize at least three different xanthones as its substrates to perform the dimerization reaction. This is Oxidoreductase nsrR from Aspergillus novofumigatus (strain IBT 16806).